The following is a 465-amino-acid chain: Ribulose bisphosphate carboxylase large chain (465 aa).

Residue Lys-4 is modified to N6,N6,N6-trimethyllysine. Thr-163 lines the substrate pocket. The active-site Proton acceptor is the Lys-165. Lys-167 is a substrate binding site. The Mg(2+) site is built by Lys-191, Asp-193, and Glu-194. An N6-carboxylysine modification is found at Lys-191. Catalysis depends on His-284, which acts as the Proton acceptor. 3 residues coordinate substrate: Arg-285, His-317, and Ser-369.

This sequence belongs to the RuBisCO large chain family. Type I subfamily. As to quaternary structure, heterohexadecamer of 8 large chains and 8 small chains; disulfide-linked. The disulfide link is formed within the large subunit homodimers. Mg(2+) is required as a cofactor. In terms of processing, the disulfide bond which can form in the large chain dimeric partners within the hexadecamer appears to be associated with oxidative stress and protein turnover.

It localises to the plastid. Its subcellular location is the chloroplast. The enzyme catalyses 2 (2R)-3-phosphoglycerate + 2 H(+) = D-ribulose 1,5-bisphosphate + CO2 + H2O. It catalyses the reaction D-ribulose 1,5-bisphosphate + O2 = 2-phosphoglycolate + (2R)-3-phosphoglycerate + 2 H(+). Functionally, ruBisCO catalyzes two reactions: the carboxylation of D-ribulose 1,5-bisphosphate, the primary event in carbon dioxide fixation, as well as the oxidative fragmentation of the pentose substrate in the photorespiration process. Both reactions occur simultaneously and in competition at the same active site. The polypeptide is Ribulose bisphosphate carboxylase large chain (Trochodendron aralioides (Wheel tree)).